The sequence spans 141 residues: Aspartate 1-decarboxylase (141 aa).

Ser-25 acts as the Schiff-base intermediate with substrate; via pyruvic acid in catalysis. Ser-25 is modified (pyruvic acid (Ser)). Thr-57 is a substrate binding site. The Proton donor role is filled by Tyr-58. A substrate-binding site is contributed by 73 to 75; it reads GAA.

This sequence belongs to the PanD family. In terms of assembly, heterooctamer of four alpha and four beta subunits. Pyruvate is required as a cofactor. Post-translationally, is synthesized initially as an inactive proenzyme, which is activated by self-cleavage at a specific serine bond to produce a beta-subunit with a hydroxyl group at its C-terminus and an alpha-subunit with a pyruvoyl group at its N-terminus.

It localises to the cytoplasm. The enzyme catalyses L-aspartate + H(+) = beta-alanine + CO2. Its pathway is cofactor biosynthesis; (R)-pantothenate biosynthesis; beta-alanine from L-aspartate: step 1/1. Catalyzes the pyruvoyl-dependent decarboxylation of aspartate to produce beta-alanine. In Salinispora arenicola (strain CNS-205), this protein is Aspartate 1-decarboxylase.